A 103-amino-acid chain; its full sequence is Large ribosomal subunit protein bL21 (103 aa).

The protein belongs to the bacterial ribosomal protein bL21 family. As to quaternary structure, part of the 50S ribosomal subunit. Contacts protein L20.

Its function is as follows. This protein binds to 23S rRNA in the presence of protein L20. The polypeptide is Large ribosomal subunit protein bL21 (Photobacterium profundum (strain SS9)).